The chain runs to 205 residues: Holliday junction branch migration complex subunit RuvA (205 aa).

The domain I stretch occupies residues 1–65; the sequence is MIGRLRGAVA…SAGLRLYGFL (65 aa). Positions 66–144 are domain II; the sequence is TREDRRAFVL…TDGPVLMSAP (79 aa). The tract at residues 145 to 153 is flexible linker; sequence TSSAPSAPA. The tract at residues 153–205 is domain III; sequence AKPAPTGDAVAALMGLGVAEVNARRVVEAAAAELGEEATVQALIKAGLKELGR.

This sequence belongs to the RuvA family. As to quaternary structure, homotetramer. Forms an RuvA(8)-RuvB(12)-Holliday junction (HJ) complex. HJ DNA is sandwiched between 2 RuvA tetramers; dsDNA enters through RuvA and exits via RuvB. An RuvB hexamer assembles on each DNA strand where it exits the tetramer. Each RuvB hexamer is contacted by two RuvA subunits (via domain III) on 2 adjacent RuvB subunits; this complex drives branch migration. In the full resolvosome a probable DNA-RuvA(4)-RuvB(12)-RuvC(2) complex forms which resolves the HJ.

The protein localises to the cytoplasm. Its function is as follows. The RuvA-RuvB-RuvC complex processes Holliday junction (HJ) DNA during genetic recombination and DNA repair, while the RuvA-RuvB complex plays an important role in the rescue of blocked DNA replication forks via replication fork reversal (RFR). RuvA specifically binds to HJ cruciform DNA, conferring on it an open structure. The RuvB hexamer acts as an ATP-dependent pump, pulling dsDNA into and through the RuvAB complex. HJ branch migration allows RuvC to scan DNA until it finds its consensus sequence, where it cleaves and resolves the cruciform DNA. This is Holliday junction branch migration complex subunit RuvA from Caulobacter vibrioides (strain ATCC 19089 / CIP 103742 / CB 15) (Caulobacter crescentus).